We begin with the raw amino-acid sequence, 434 residues long: GTPase Obg (434 aa).

An Obg domain is found at 4–162; the sequence is ADFIDRIVIY…RKLVLELKLL (159 aa). The OBG-type G domain maps to 163–333; that stretch reads ADVGLVGYPN…IVYKLAEIVK (171 aa). Residues 169 to 176, 194 to 198, 215 to 218, 285 to 288, and 314 to 316 each bind GTP; these read GYPNVGKS, FTTTI, DIPG, NKID, and SII. The Mg(2+) site is built by serine 176 and threonine 196. The region spanning 355 to 434 is the OCT domain; it reads LWKELPERFN…VAQRAFEYKE (80 aa).

Belongs to the TRAFAC class OBG-HflX-like GTPase superfamily. OBG GTPase family. As to quaternary structure, monomer. The cofactor is Mg(2+).

The protein resides in the cytoplasm. In terms of biological role, an essential GTPase which binds GTP, GDP and possibly (p)ppGpp with moderate affinity, with high nucleotide exchange rates and a fairly low GTP hydrolysis rate. Plays a role in control of the cell cycle, stress response, ribosome biogenesis and in those bacteria that undergo differentiation, in morphogenesis control. The sequence is that of GTPase Obg from Thermosipho africanus (strain TCF52B).